The primary structure comprises 242 residues: MLKQLLSKCAEGKALTEDEAYAAMNIIMSGEATDSQIASLLSMLRLRGETVDELVGFVRAMRDRMTAIEASDDVIDTCGTGGDGAATFNVSTAAAIVISSLGVKVAKHGNRAVSSKSGSADVLERLGIDIHTSPSAAKQALETKGLAFLFAPLYHAAMKHAAGPRKEIGFRTVFNLIGPLANPARCKRQVVGVYSTCYAEKLAEAMRRLGSEHVLFVTGRDGLDECSIAAETDVVELKDGAI.

Residues Gly79, 82–83 (GD), Thr87, 89–92 (NVST), 107–115 (KHGNRAVSS), and Ser119 each bind 5-phospho-alpha-D-ribose 1-diphosphate. Gly79 is a binding site for anthranilate. Ser91 provides a ligand contact to Mg(2+). Asn110 lines the anthranilate pocket. Residue Arg165 coordinates anthranilate. Residues Asp224 and Glu225 each coordinate Mg(2+).

The protein belongs to the anthranilate phosphoribosyltransferase family. In terms of assembly, homodimer. Mg(2+) serves as cofactor.

It carries out the reaction N-(5-phospho-beta-D-ribosyl)anthranilate + diphosphate = 5-phospho-alpha-D-ribose 1-diphosphate + anthranilate. It participates in amino-acid biosynthesis; L-tryptophan biosynthesis; L-tryptophan from chorismate: step 2/5. Functionally, catalyzes the transfer of the phosphoribosyl group of 5-phosphorylribose-1-pyrophosphate (PRPP) to anthranilate to yield N-(5'-phosphoribosyl)-anthranilate (PRA). The sequence is that of Anthranilate phosphoribosyltransferase (trpD) from Bacillus caldotenax.